A 558-amino-acid chain; its full sequence is Factor VII-activating protease (558 aa).

An N-terminal signal peptide occupies residues 1-23 (MSVVMLVFRVLLLIALVGNSAIG). EGF-like domains are found at residues 71–107 (DDDP…SRCQ), 109–146 (VQNK…PDCS), and 148–186 (VLPV…RFCE). Disulfide bonds link Cys-75–Cys-86, Cys-80–Cys-95, Cys-97–Cys-106, Cys-113–Cys-123, Cys-118–Cys-134, Cys-136–Cys-145, Cys-152–Cys-163, Cys-157–Cys-174, Cys-176–Cys-185, Cys-192–Cys-274, Cys-213–Cys-255, Cys-244–Cys-269, Cys-299–Cys-433, Cys-345–Cys-361, Cys-353–Cys-422, Cys-445–Cys-513, Cys-475–Cys-491, and Cys-503–Cys-531. The Kringle domain maps to 191 to 274 (DCYVGDGYSY…KWEYCNVEVC (84 aa)). The region spanning 312 to 553 (IYGGFKSTAG…FLNWIKTTMH (242 aa)) is the Peptidase S1 domain. Active-site charge relay system residues include His-360 and Asp-409. Ser-507 acts as the Charge relay system in catalysis.

The protein belongs to the peptidase S1 family. In terms of assembly, heterodimer; disulfide-linked. Heterodimer of a 50 kDa heavy and a 27 kDa light chain linked by a disulfide bond. In terms of processing, proteolytic cleavage at Gly-23 or Met-27 can give rise to the 50 kDa heavy chain (HC) and cleavage at Arg-311 or Lys-317 can give rise to the 27 kDa light chain (LC). The HC can undergo further proteolytic cleavage giving rise to a 26 kDa fragment. The LC can undergo further proteolytic cleavage at Arg-311 leading to a 17-kDa fragment and at Arg-478 leading to a 8-kDa fragment.

It localises to the secreted. Its function is as follows. Cleaves the alpha-chain at multiple sites and the beta-chain between 'Lys-53' and 'Lys-54' but not the gamma-chain of fibrinogen and therefore does not initiate the formation of the fibrin clot and does not cause the fibrinolysis directly. It does not cleave (activate) prothrombin and plasminogen but converts the inactive single chain urinary plasminogen activator (pro-urokinase) to the active two chain form. Activates coagulation factor VII. May function as a tumor suppressor negatively regulating cell proliferation and cell migration. This Rattus norvegicus (Rat) protein is Factor VII-activating protease.